A 152-amino-acid polypeptide reads, in one-letter code: Xanthine-guanine phosphoribosyltransferase (152 aa).

5-phospho-alpha-D-ribose 1-diphosphate-binding positions include 37 to 38 (RG), Arg-69, and 88 to 96 (DDLVDTGGT). Arg-69 contributes to the GMP binding site. Residue Asp-89 participates in Mg(2+) binding. Residues Asp-92 and Ile-135 each coordinate guanine. Xanthine contacts are provided by Asp-92 and Ile-135. GMP is bound by residues 92–96 (DTGGT) and 134–135 (WI).

The protein belongs to the purine/pyrimidine phosphoribosyltransferase family. XGPT subfamily. Homotetramer. Mg(2+) serves as cofactor.

Its subcellular location is the cell inner membrane. The catalysed reaction is GMP + diphosphate = guanine + 5-phospho-alpha-D-ribose 1-diphosphate. It catalyses the reaction XMP + diphosphate = xanthine + 5-phospho-alpha-D-ribose 1-diphosphate. The enzyme catalyses IMP + diphosphate = hypoxanthine + 5-phospho-alpha-D-ribose 1-diphosphate. It participates in purine metabolism; GMP biosynthesis via salvage pathway; GMP from guanine: step 1/1. The protein operates within purine metabolism; XMP biosynthesis via salvage pathway; XMP from xanthine: step 1/1. Purine salvage pathway enzyme that catalyzes the transfer of the ribosyl-5-phosphate group from 5-phospho-alpha-D-ribose 1-diphosphate (PRPP) to the N9 position of the 6-oxopurines guanine and xanthine to form the corresponding ribonucleotides GMP (guanosine 5'-monophosphate) and XMP (xanthosine 5'-monophosphate), with the release of PPi. To a lesser extent, also acts on hypoxanthine. The protein is Xanthine-guanine phosphoribosyltransferase of Shigella boydii serotype 4 (strain Sb227).